The primary structure comprises 478 residues: Glycogen synthase (478 aa).

Lys15 is an ADP-alpha-D-glucose binding site.

It belongs to the glycosyltransferase 1 family. Bacterial/plant glycogen synthase subfamily.

It carries out the reaction [(1-&gt;4)-alpha-D-glucosyl](n) + ADP-alpha-D-glucose = [(1-&gt;4)-alpha-D-glucosyl](n+1) + ADP + H(+). The protein operates within glycan biosynthesis; glycogen biosynthesis. Functionally, synthesizes alpha-1,4-glucan chains using ADP-glucose. In Clostridium botulinum (strain Eklund 17B / Type B), this protein is Glycogen synthase.